The chain runs to 275 residues: 2,3,4,5-tetrahydropyridine-2,6-dicarboxylate N-succinyltransferase (275 aa).

It belongs to the transferase hexapeptide repeat family.

The protein localises to the cytoplasm. The enzyme catalyses (S)-2,3,4,5-tetrahydrodipicolinate + succinyl-CoA + H2O = (S)-2-succinylamino-6-oxoheptanedioate + CoA. It participates in amino-acid biosynthesis; L-lysine biosynthesis via DAP pathway; LL-2,6-diaminopimelate from (S)-tetrahydrodipicolinate (succinylase route): step 1/3. The sequence is that of 2,3,4,5-tetrahydropyridine-2,6-dicarboxylate N-succinyltransferase from Burkholderia multivorans (strain ATCC 17616 / 249).